The chain runs to 2498 residues: PKS-NRPS hybrid synthetase acdB (2498 aa).

The tract at residues 34–427 (FEQAAHAHFD…GRADSQVKIR (394 aa)) is adenylation (A) domain. Residues 531–606 (QPATELERDI…SLAGYLMDMD (76 aa)) form the Carrier 1 domain. The residue at position 566 (S566) is an O-(pantetheine 4'-phosphoryl)serine. In terms of domain architecture, Ketosynthase family 3 (KS3) spans 627–1058 (SDDIAVVSMA…GTNAHVIVEE (432 aa)). Residues C802, H938, and H979 each act as for beta-ketoacyl synthase activity in the active site. The interval 1165–1485 (LFAGQGSQQL…EILARLHVQH (321 aa)) is malonyl-CoA:ACP transacylase (MAT) domain. Residues 1739–1917 (GAVLITGGLS…PAVCVAYGPL (179 aa)) are ketoreductase (KR) domain. One can recognise a Carrier 2 domain in the interval 2017-2092 (EILLRTIQEA…ELSRYLLPQL (76 aa)). An O-(pantetheine 4'-phosphoryl)serine modification is found at S2052. The segment at 2149 to 2378 (VTGATEFVGA…FPVDYVCRTI (230 aa)) is thioester reductase (TE) domain.

This sequence in the C-terminal section; belongs to the NRP synthetase family. Pantetheine 4'-phosphate serves as cofactor.

The protein operates within secondary metabolite biosynthesis. PKS-NRPS hybrid synthetase; part of the gene cluster that mediates the biosynthesis of aspcandine, a pyrrolobenzazepine alkaloid. Initially, the indoleamine 2,3-dioxygenase acdA accepts L-tryptophan and performs the oxidative opening of the indole ring to yield N'-formyl-L-kynurenine, which undergoes the spontaneous deformylation reaction to provide L-kynurenine. The kynurenine 3-monooxygenase acdD then hydroxylates L-kynurenine to afford 3-hydroxy-L-kynurenine. 3-hydroxy-L-kynurenine is activated by the A domain of the NRPS-PKS acdB and subsequently loaded onto the enzyme. The KS domain conducts the decarboxylative condensation of the 3-hydroxy-L-kynurenyl and malonyl moieties, and subsequent nucleophilic attacks by the two amino groups would occur nonenzymatically at two distinct positions, achieving the chain release and the construction of the tricyclic system. Finally, a dehydration reaction completes the biosynthesis to yield aspcandine. This chain is PKS-NRPS hybrid synthetase acdB, found in Aspergillus candidus.